The sequence spans 252 residues: NAC domain-containing protein 23 (252 aa).

In terms of domain architecture, NAC spans 12-177 (MPPGFRFQPT…EMVLCRISNK (166 aa)). The DNA-binding element occupies 110-183 (TAVKRRFVFY…ISNKDLPKPP (74 aa)). Positions 225–252 (VDDAAAADDDPGDLDEEIDDSMQRNHGG) are disordered. The segment covering 229-244 (AAADDDPGDLDEEIDD) has biased composition (acidic residues).

Forms heterodimers with NAC26. Expressed in stems and panicles. Expressed in developing seeds.

Its subcellular location is the nucleus. It localises to the cytoplasm. In terms of biological role, transcription factor involved in the regulation of seed size. Possesses transactivation activity in yeast. The protein is NAC domain-containing protein 23 of Oryza sativa subsp. indica (Rice).